The sequence spans 225 residues: NAD(P)H-quinone oxidoreductase subunit K, chloroplastic (225 aa).

The [4Fe-4S] cluster site is built by cysteine 43, cysteine 44, cysteine 108, and cysteine 139.

It belongs to the complex I 20 kDa subunit family. NDH is composed of at least 16 different subunits, 5 of which are encoded in the nucleus. [4Fe-4S] cluster serves as cofactor.

It is found in the plastid. Its subcellular location is the chloroplast thylakoid membrane. It carries out the reaction a plastoquinone + NADH + (n+1) H(+)(in) = a plastoquinol + NAD(+) + n H(+)(out). The enzyme catalyses a plastoquinone + NADPH + (n+1) H(+)(in) = a plastoquinol + NADP(+) + n H(+)(out). Its function is as follows. NDH shuttles electrons from NAD(P)H:plastoquinone, via FMN and iron-sulfur (Fe-S) centers, to quinones in the photosynthetic chain and possibly in a chloroplast respiratory chain. The immediate electron acceptor for the enzyme in this species is believed to be plastoquinone. Couples the redox reaction to proton translocation, and thus conserves the redox energy in a proton gradient. In Olimarabidopsis pumila (Dwarf rocket), this protein is NAD(P)H-quinone oxidoreductase subunit K, chloroplastic.